The chain runs to 107 residues: Dispanin subfamily A member 2b (107 aa).

Topologically, residues 1–31 are extracellular; it reads MEYRTDQVPMSPRSVQGAPGTLPIRDHLPWS. A helical membrane pass occupies residues 32–52; it reads IFNLFYMNVCCLGLTAMIFSV. Residues C41 and C42 are each lipidated (S-palmitoyl cysteine). Residues 53-77 are Cytoplasmic-facing; sequence KSRDRKVVGDVEGARHYGSTARSLN. A helical transmembrane segment spans residues 78–98; the sequence is IAATVLGILLIIILIGLAATG. The Extracellular segment spans residues 99 to 107; the sequence is TIQALKYKG.

It belongs to the CD225/Dispanin family. As to expression, expressed various cell types in torpedo electric organ and muscle, especially fibroblasts, capillary endothelial cells, and axonal cuff cells.

Its subcellular location is the cell membrane. This chain is Dispanin subfamily A member 2b, found in Torpedo marmorata (Marbled electric ray).